The chain runs to 268 residues: Hydroxyethylthiazole kinase (268 aa).

Methionine 45 serves as a coordination point for substrate. Arginine 121 and threonine 167 together coordinate ATP. Glycine 194 is a substrate binding site.

It belongs to the Thz kinase family. Requires Mg(2+) as cofactor.

It carries out the reaction 5-(2-hydroxyethyl)-4-methylthiazole + ATP = 4-methyl-5-(2-phosphooxyethyl)-thiazole + ADP + H(+). Its pathway is cofactor biosynthesis; thiamine diphosphate biosynthesis; 4-methyl-5-(2-phosphoethyl)-thiazole from 5-(2-hydroxyethyl)-4-methylthiazole: step 1/1. Catalyzes the phosphorylation of the hydroxyl group of 4-methyl-5-beta-hydroxyethylthiazole (THZ). The protein is Hydroxyethylthiazole kinase of Bacillus cereus (strain ZK / E33L).